Reading from the N-terminus, the 229-residue chain is Lipoprotein-releasing system ATP-binding protein LolD (229 aa).

The 223-residue stretch at 7 to 229 (LQCINLTKSF…KNGQLFNNKN (223 aa)) folds into the ABC transporter domain. 43-50 (GKSGSGKS) contacts ATP.

This sequence belongs to the ABC transporter superfamily. Lipoprotein translocase (TC 3.A.1.125) family. The complex is composed of two ATP-binding proteins (LolD) and two transmembrane proteins (LolC and LolE).

The protein localises to the cell inner membrane. In terms of biological role, part of the ABC transporter complex LolCDE involved in the translocation of mature outer membrane-directed lipoproteins, from the inner membrane to the periplasmic chaperone, LolA. Responsible for the formation of the LolA-lipoprotein complex in an ATP-dependent manner. In Buchnera aphidicola subsp. Schizaphis graminum (strain Sg), this protein is Lipoprotein-releasing system ATP-binding protein LolD.